The following is a 480-amino-acid chain: Aspartyl/glutamyl-tRNA(Asn/Gln) amidotransferase subunit B (480 aa).

Belongs to the GatB/GatE family. GatB subfamily. As to quaternary structure, heterotrimer of A, B and C subunits.

It carries out the reaction L-glutamyl-tRNA(Gln) + L-glutamine + ATP + H2O = L-glutaminyl-tRNA(Gln) + L-glutamate + ADP + phosphate + H(+). The enzyme catalyses L-aspartyl-tRNA(Asn) + L-glutamine + ATP + H2O = L-asparaginyl-tRNA(Asn) + L-glutamate + ADP + phosphate + 2 H(+). Allows the formation of correctly charged Asn-tRNA(Asn) or Gln-tRNA(Gln) through the transamidation of misacylated Asp-tRNA(Asn) or Glu-tRNA(Gln) in organisms which lack either or both of asparaginyl-tRNA or glutaminyl-tRNA synthetases. The reaction takes place in the presence of glutamine and ATP through an activated phospho-Asp-tRNA(Asn) or phospho-Glu-tRNA(Gln). The chain is Aspartyl/glutamyl-tRNA(Asn/Gln) amidotransferase subunit B from Streptococcus agalactiae serotype III (strain NEM316).